Consider the following 101-residue polypeptide: Small ribosomal subunit protein uS14 (101 aa).

It belongs to the universal ribosomal protein uS14 family. As to quaternary structure, part of the 30S ribosomal subunit. Contacts proteins S3 and S10.

Its function is as follows. Binds 16S rRNA, required for the assembly of 30S particles and may also be responsible for determining the conformation of the 16S rRNA at the A site. This chain is Small ribosomal subunit protein uS14, found in Shewanella piezotolerans (strain WP3 / JCM 13877).